The chain runs to 267 residues: L-aspartate dehydrogenase (267 aa).

The NAD(+) site is built by Ala124 and Asn190. Residue His218 is part of the active site.

Belongs to the L-aspartate dehydrogenase family.

The enzyme catalyses L-aspartate + NADP(+) + H2O = oxaloacetate + NH4(+) + NADPH + H(+). It carries out the reaction L-aspartate + NAD(+) + H2O = oxaloacetate + NH4(+) + NADH + H(+). The protein operates within cofactor biosynthesis; NAD(+) biosynthesis; iminoaspartate from L-aspartate (dehydrogenase route): step 1/1. In terms of biological role, specifically catalyzes the NAD or NADP-dependent dehydrogenation of L-aspartate to iminoaspartate. This Methanococcus maripaludis (strain C6 / ATCC BAA-1332) protein is L-aspartate dehydrogenase.